The chain runs to 318 residues: MIKLGIVMDPIASINIKKDSSFAMMLEAQRRGYEIHYMEMNDLHLEQGVALADTKVVELKEDPSGWYQFKSEQTIALSELDAILMRKDPPFDTEYIYATYILERAEDEGVLVVNKPQSLRDCNEKLFTAWFPELTPITMVTRKAEKIKAFREQHGDVILKPLDGMGGASIFRVKEGDPNLSVIIETLTNHGQNYCMAQTFVPDISNGDKRILVVDGEPMPYCLARIPAKGETRGNLAAGGRGEPRPLSETDKKIALAVAPTLKEKGLLFVGLDVIGDKLTEINVTSPTCIREIEAAYDISITGKLMDAIERRLKATAM.

The 187-residue stretch at 124-310 (EKLFTAWFPE…ITGKLMDAIE (187 aa)) folds into the ATP-grasp domain. Position 150–207 (150–207 (FREQHGDVILKPLDGMGGASIFRVKEGDPNLSVIIETLTNHGQNYCMAQTFVPDISNG)) interacts with ATP. Mg(2+)-binding residues include glutamate 281 and asparagine 283.

The protein belongs to the prokaryotic GSH synthase family. Requires Mg(2+) as cofactor. Mn(2+) serves as cofactor.

The catalysed reaction is gamma-L-glutamyl-L-cysteine + glycine + ATP = glutathione + ADP + phosphate + H(+). It participates in sulfur metabolism; glutathione biosynthesis; glutathione from L-cysteine and L-glutamate: step 2/2. The chain is Glutathione synthetase from Vibrio cholerae serotype O1 (strain ATCC 39315 / El Tor Inaba N16961).